The sequence spans 128 residues: MHALLLLLLLALGSALRSPQPPEARAKLCGHHLVRALVRVCGGPRWSPEATQPVDTRDRELLQWLEQRHLLHALVADADPALDPDPALDPQLPHQASQRQRRSVATNAVHRCCLTGCTQQDLLGLCPH.

The N-terminal stretch at 1-15 is a signal peptide; sequence MHALLLLLLLALGSA. Intrachain disulfides connect cysteine 29–cysteine 113, cysteine 41–cysteine 126, and cysteine 112–cysteine 117. Residues 81 to 94 are compositionally biased toward low complexity; it reads ALDPDPALDPQLPH. The segment at 81–101 is disordered; the sequence is ALDPDPALDPQLPHQASQRQR.

It belongs to the insulin family. As to quaternary structure, heterodimer of a B chain and an A chain linked by two disulfide bonds. In terms of tissue distribution, expressed in Leydig cells of the testis, and weakly in the theca interna cells of antral follicles and the corpus luteum of the ovary.

It localises to the secreted. Its function is as follows. Seems to play a role in testicular function. May be a trophic hormone with a role in testicular descent in fetal life. Is a ligand for LGR8 receptor. This chain is Insulin-like 3 (Insl3), found in Rattus norvegicus (Rat).